Reading from the N-terminus, the 219-residue chain is NADH-quinone oxidoreductase subunit C (219 aa).

The protein belongs to the complex I 30 kDa subunit family. As to quaternary structure, NDH-1 is composed of 14 different subunits. Subunits NuoB, C, D, E, F, and G constitute the peripheral sector of the complex.

The protein resides in the cell inner membrane. It catalyses the reaction a quinone + NADH + 5 H(+)(in) = a quinol + NAD(+) + 4 H(+)(out). In terms of biological role, NDH-1 shuttles electrons from NADH, via FMN and iron-sulfur (Fe-S) centers, to quinones in the respiratory chain. The immediate electron acceptor for the enzyme in this species is believed to be ubiquinone. Couples the redox reaction to proton translocation (for every two electrons transferred, four hydrogen ions are translocated across the cytoplasmic membrane), and thus conserves the redox energy in a proton gradient. This chain is NADH-quinone oxidoreductase subunit C, found in Methylorubrum populi (strain ATCC BAA-705 / NCIMB 13946 / BJ001) (Methylobacterium populi).